Consider the following 281-residue polypeptide: Pantothenate synthetase (281 aa).

30–37 (MGYLHEGH) contributes to the ATP binding site. His-37 serves as the catalytic Proton donor. Gln-61 serves as a coordination point for (R)-pantoate. Gln-61 is a beta-alanine binding site. 147–150 (GQKD) is an ATP binding site. Gln-153 lines the (R)-pantoate pocket. ATP is bound by residues Val-176 and 184-187 (MSSR).

Belongs to the pantothenate synthetase family. In terms of assembly, homodimer.

It localises to the cytoplasm. It catalyses the reaction (R)-pantoate + beta-alanine + ATP = (R)-pantothenate + AMP + diphosphate + H(+). It participates in cofactor biosynthesis; (R)-pantothenate biosynthesis; (R)-pantothenate from (R)-pantoate and beta-alanine: step 1/1. Functionally, catalyzes the condensation of pantoate with beta-alanine in an ATP-dependent reaction via a pantoyl-adenylate intermediate. This is Pantothenate synthetase from Acetivibrio thermocellus (strain ATCC 27405 / DSM 1237 / JCM 9322 / NBRC 103400 / NCIMB 10682 / NRRL B-4536 / VPI 7372) (Clostridium thermocellum).